The chain runs to 271 residues: uncharacterized protein (271 aa).

Solcar repeat units follow at residues 3–74 (VQTL…AKRR), 81–163 (EGAI…SKKY), and 171–268 (DISV…FKSK). Helical transmembrane passes span 5 to 26 (TLMA…IDTI), 49 to 69 (GLPI…STYV), 84 to 104 (ILYS…WTPL), 138 to 158 (GYWM…VCYE), 170 to 190 (WDIS…ATTI), and 240 to 261 (FTRG…SMSV).

Belongs to the mitochondrial carrier (TC 2.A.29) family.

It is found in the mitochondrion inner membrane. This is an uncharacterized protein from Schizosaccharomyces pombe (strain 972 / ATCC 24843) (Fission yeast).